A 1598-amino-acid chain; its full sequence is Pentafunctional AROM polypeptide (1598 aa).

The segment at 1-384 (MGVPTKISIL…YEPRACTVSN (384 aa)) is 3-dehydroquinate synthase. Residues 44 to 46 (DTN), 81 to 84 (ESSK), 114 to 116 (GGV), and aspartate 119 contribute to the NAD(+) site. 7-phospho-2-dehydro-3-deoxy-D-arabino-heptonate is bound at residue arginine 130. Residue 139 to 140 (TT) coordinates NAD(+). 7-phospho-2-dehydro-3-deoxy-D-arabino-heptonate contacts are provided by aspartate 146 and lysine 152. An NAD(+)-binding site is contributed by lysine 161. Residue asparagine 162 participates in 7-phospho-2-dehydro-3-deoxy-D-arabino-heptonate binding. Residues 179-182 (FLNT) and asparagine 190 each bind NAD(+). Glutamate 194 provides a ligand contact to Zn(2+). 7-phospho-2-dehydro-3-deoxy-D-arabino-heptonate-binding positions include 194 to 197 (EVIK) and lysine 250. Glutamate 260 (proton acceptor; for 3-dehydroquinate synthase activity) is an active-site residue. 7-phospho-2-dehydro-3-deoxy-D-arabino-heptonate is bound by residues 264–268 (RNLLN) and histidine 271. Histidine 271 lines the Zn(2+) pocket. Histidine 275 serves as the catalytic Proton acceptor; for 3-dehydroquinate synthase activity. Positions 287 and 356 each coordinate 7-phospho-2-dehydro-3-deoxy-D-arabino-heptonate. Histidine 287 contributes to the Zn(2+) binding site. The EPSP synthase stretch occupies residues 397 to 842 (VYPGFPKSLN…WDTLAQTFKV (446 aa)). The active-site For EPSP synthase activity is cysteine 824. A shikimate kinase region spans residues 867-1059 (AASIFIIGMR…RRKENTFFVS (193 aa)). Residue 874-881 (GMRGAGKT) participates in ATP binding. The interval 1060 to 1280 (LTFPDLTPAS…AAPGQLSARE (221 aa)) is 3-dehydroquinase. Histidine 1183 serves as the catalytic Proton acceptor; for 3-dehydroquinate dehydratase activity. Residue lysine 1211 is the Schiff-base intermediate with substrate; for 3-dehydroquinate dehydratase activity of the active site. Residues 1293–1598 (AKKFAVIGKP…GVSSSDDIIS (306 aa)) form a shikimate dehydrogenase region.

In the N-terminal section; belongs to the sugar phosphate cyclases superfamily. Dehydroquinate synthase family. It in the 2nd section; belongs to the EPSP synthase family. The protein in the 3rd section; belongs to the shikimate kinase family. This sequence in the 4th section; belongs to the type-I 3-dehydroquinase family. In the C-terminal section; belongs to the shikimate dehydrogenase family. In terms of assembly, homodimer. The cofactor is Zn(2+).

Its subcellular location is the cytoplasm. It carries out the reaction 7-phospho-2-dehydro-3-deoxy-D-arabino-heptonate = 3-dehydroquinate + phosphate. The catalysed reaction is 3-dehydroquinate = 3-dehydroshikimate + H2O. The enzyme catalyses shikimate + NADP(+) = 3-dehydroshikimate + NADPH + H(+). It catalyses the reaction shikimate + ATP = 3-phosphoshikimate + ADP + H(+). It carries out the reaction 3-phosphoshikimate + phosphoenolpyruvate = 5-O-(1-carboxyvinyl)-3-phosphoshikimate + phosphate. It participates in metabolic intermediate biosynthesis; chorismate biosynthesis; chorismate from D-erythrose 4-phosphate and phosphoenolpyruvate: step 2/7. It functions in the pathway metabolic intermediate biosynthesis; chorismate biosynthesis; chorismate from D-erythrose 4-phosphate and phosphoenolpyruvate: step 3/7. Its pathway is metabolic intermediate biosynthesis; chorismate biosynthesis; chorismate from D-erythrose 4-phosphate and phosphoenolpyruvate: step 4/7. The protein operates within metabolic intermediate biosynthesis; chorismate biosynthesis; chorismate from D-erythrose 4-phosphate and phosphoenolpyruvate: step 5/7. It participates in metabolic intermediate biosynthesis; chorismate biosynthesis; chorismate from D-erythrose 4-phosphate and phosphoenolpyruvate: step 6/7. The AROM polypeptide catalyzes 5 consecutive enzymatic reactions in prechorismate polyaromatic amino acid biosynthesis. The chain is Pentafunctional AROM polypeptide from Paracoccidioides lutzii (strain ATCC MYA-826 / Pb01) (Paracoccidioides brasiliensis).